Reading from the N-terminus, the 300-residue chain is DNA repair protein RecO (300 aa).

This sequence belongs to the RecO family.

Involved in DNA repair and RecF pathway recombination. The chain is DNA repair protein RecO from Nostoc punctiforme (strain ATCC 29133 / PCC 73102).